A 113-amino-acid polypeptide reads, in one-letter code: Ribulose bisphosphate carboxylase small subunit (113 aa).

It belongs to the RuBisCO small chain family. In terms of assembly, heterohexadecamer of 8 large and 8 small subunits.

It localises to the carboxysome. In terms of biological role, ruBisCO catalyzes two reactions: the carboxylation of D-ribulose 1,5-bisphosphate, the primary event in carbon dioxide fixation, as well as the oxidative fragmentation of the pentose substrate in the photorespiration process. Both reactions occur simultaneously and in competition at the same active site. Although the small subunit is not catalytic it is essential for maximal activity. The sequence is that of Ribulose bisphosphate carboxylase small subunit from Synechococcus sp. (strain WH7803).